We begin with the raw amino-acid sequence, 150 residues long: Large ribosomal subunit protein bL9 (150 aa).

It belongs to the bacterial ribosomal protein bL9 family.

Its function is as follows. Binds to the 23S rRNA. This Corynebacterium efficiens (strain DSM 44549 / YS-314 / AJ 12310 / JCM 11189 / NBRC 100395) protein is Large ribosomal subunit protein bL9.